A 198-amino-acid polypeptide reads, in one-letter code: Ribonuclease HII (198 aa).

Residues 11-198 enclose the RNase H type-2 domain; that stretch reads TCIAGVDEVG…APVKRALGLA (188 aa). A divalent metal cation contacts are provided by Asp-17, Glu-18, and Asp-109.

It belongs to the RNase HII family. Mn(2+) serves as cofactor. It depends on Mg(2+) as a cofactor.

It is found in the cytoplasm. The enzyme catalyses Endonucleolytic cleavage to 5'-phosphomonoester.. Its function is as follows. Endonuclease that specifically degrades the RNA of RNA-DNA hybrids. This is Ribonuclease HII from Pectobacterium carotovorum subsp. carotovorum (strain PC1).